The sequence spans 291 residues: 4-diphosphocytidyl-2-C-methyl-D-erythritol kinase (291 aa).

Lys10 is an active-site residue. 94-104 serves as a coordination point for ATP; it reads PVSAGLAGGSS. The active site involves Asp136.

The protein belongs to the GHMP kinase family. IspE subfamily.

It carries out the reaction 4-CDP-2-C-methyl-D-erythritol + ATP = 4-CDP-2-C-methyl-D-erythritol 2-phosphate + ADP + H(+). It participates in isoprenoid biosynthesis; isopentenyl diphosphate biosynthesis via DXP pathway; isopentenyl diphosphate from 1-deoxy-D-xylulose 5-phosphate: step 3/6. Functionally, catalyzes the phosphorylation of the position 2 hydroxy group of 4-diphosphocytidyl-2C-methyl-D-erythritol. The polypeptide is 4-diphosphocytidyl-2-C-methyl-D-erythritol kinase (Listeria monocytogenes serotype 4a (strain HCC23)).